The sequence spans 246 residues: uncharacterized protein (246 aa).

3 disordered regions span residues 29-54 (SLET…ENGS), 93-114 (LRRT…EDKF), and 148-246 (PIPP…SVVI). Positions 35 to 49 (PTSSSPSLSSNSDVS) are enriched in low complexity. The segment covering 172–183 (RQQTNNIRTLHV) has biased composition (polar residues). Composition is skewed to low complexity over residues 190 to 203 (SSSS…PSSS) and 214 to 225 (SKTTKNRSSNSS). Residue N219 is glycosylated (N-linked (GlcNAc...) asparagine). The span at 235–246 (LTPSPTFESVVI) shows a compositional bias: polar residues.

This is an uncharacterized protein from Caenorhabditis elegans.